Here is a 106-residue protein sequence, read N- to C-terminus: Urease subunit beta (106 aa).

Belongs to the urease beta subunit family. In terms of assembly, heterotrimer of UreA (gamma), UreB (beta) and UreC (alpha) subunits. Three heterotrimers associate to form the active enzyme.

It is found in the cytoplasm. It carries out the reaction urea + 2 H2O + H(+) = hydrogencarbonate + 2 NH4(+). The protein operates within nitrogen metabolism; urea degradation; CO(2) and NH(3) from urea (urease route): step 1/1. The polypeptide is Urease subunit beta (Synechococcus sp. (strain CC9605)).